Reading from the N-terminus, the 322-residue chain is ATP-dependent 6-phosphofructokinase (322 aa).

Gly-13 lines the ATP pocket. An ADP-binding site is contributed by 23-27 (RAVVR). Residues 74 to 75 (RC) and 104 to 107 (GDGS) contribute to the ATP site. Asp-105 contacts Mg(2+). 127 to 129 (TID) provides a ligand contact to substrate. Residue Asp-129 is the Proton acceptor of the active site. Arg-156 provides a ligand contact to ADP. Substrate is bound by residues Arg-164 and 171–173 (MGR). ADP contacts are provided by residues 187–189 (GAE) and 215–217 (KRH). Substrate-binding positions include Glu-224, Arg-246, and 252-255 (HIQR).

The protein belongs to the phosphofructokinase type A (PFKA) family. ATP-dependent PFK group I subfamily. Prokaryotic clade 'B1' sub-subfamily. In terms of assembly, homotetramer. Requires Mg(2+) as cofactor.

The protein localises to the cytoplasm. The enzyme catalyses beta-D-fructose 6-phosphate + ATP = beta-D-fructose 1,6-bisphosphate + ADP + H(+). It functions in the pathway carbohydrate degradation; glycolysis; D-glyceraldehyde 3-phosphate and glycerone phosphate from D-glucose: step 3/4. With respect to regulation, allosterically activated by ADP and other diphosphonucleosides, and allosterically inhibited by phosphoenolpyruvate. Its function is as follows. Catalyzes the phosphorylation of D-fructose 6-phosphate to fructose 1,6-bisphosphate by ATP, the first committing step of glycolysis. This is ATP-dependent 6-phosphofructokinase from Paenibacillus macquariensis (Bacillus macquariensis).